The following is a 383-amino-acid chain: Retrovirus-related Pol polyprotein from type-1 retrotransposable element R1 3 (383 aa).

The 88-residue stretch at 1-88 (VDAFADDLLL…DRVRYLGVNV (88 aa)) folds into the Reverse transcriptase domain. The interval 229–383 (LSLHECRELV…VQRMRENEES (155 aa)) is nucleic acid-binding endonuclease.

The catalysed reaction is DNA(n) + a 2'-deoxyribonucleoside 5'-triphosphate = DNA(n+1) + diphosphate. In Nasonia vitripennis (Parasitic wasp), this protein is Retrovirus-related Pol polyprotein from type-1 retrotransposable element R1 3.